Consider the following 187-residue polypeptide: Transmembrane protein 272 (187 aa).

Helical transmembrane passes span 21–41, 52–72, 107–127, and 149–169; these read CFVV…FIGM, LIPL…SLLL, IHLL…YWVF, and LYLF…LLLL.

The protein localises to the membrane. This chain is Transmembrane protein 272, found in Homo sapiens (Human).